A 499-amino-acid polypeptide reads, in one-letter code: MINIRPDEISNIIRQQIESYDQEVQIDNVGTVLQIGDGIARVYGLEQVMAGELLEFDDSTVGIALNLENDNVGAVLMGPGLGILEGSAVRSTGKIAQVPVGDAFLGRVVNSLAKPIDGKGDIPASETRLVESMAPGIITRKSVCEPVQTGITAIDSMIPIGRGQRELIIGDRQTGKTSVAIDTIINQKTEDVICVYVAIGQKASSVAGVVSTLEDKGALGYTIIVAANADEPATLQYIAPYTGAALAEYFMYKGKATVIVYDDLTKQASAYRQMSLLLRRPPGREAYPGDVFYLHSRLLERAAKLSDALGGGSMTALPIIETQAGDVSAYIPTNVISITDGQIFLSGDLFNSGIRPAINVGISVSRVGSAAQTKAMKQVAGKLKLELAQFAELEAFSQFASDLDAATQAELARGVRLREMLKQKQNSPISVEEQVAIIYAGINGYLDTIPVSEVKGFVEKLRSYLRNSAPQFISSIQSEKKLSPENEELLKKILTDLKG.

ATP is bound at residue 170 to 177 (GDRQTGKT).

This sequence belongs to the ATPase alpha/beta chains family. F-type ATPases have 2 components, CF(1) - the catalytic core - and CF(0) - the membrane proton channel. CF(1) has five subunits: alpha(3), beta(3), gamma(1), delta(1), epsilon(1). CF(0) has four main subunits: a, b, b' and c.

The protein localises to the plastid. The protein resides in the chloroplast thylakoid membrane. The catalysed reaction is ATP + H2O + 4 H(+)(in) = ADP + phosphate + 5 H(+)(out). Functionally, produces ATP from ADP in the presence of a proton gradient across the membrane. The alpha chain is a regulatory subunit. This is ATP synthase subunit alpha, chloroplastic from Emiliania huxleyi (Coccolithophore).